Here is a 278-residue protein sequence, read N- to C-terminus: Large ribosomal subunit protein uL2 (278 aa).

Disordered stretches follow at residues Ser-27–Gly-57 and Val-224–Arg-278. Residues Arg-258 to Arg-278 show a composition bias toward basic residues.

The protein belongs to the universal ribosomal protein uL2 family. Part of the 50S ribosomal subunit. Forms a bridge to the 30S subunit in the 70S ribosome.

Its function is as follows. One of the primary rRNA binding proteins. Required for association of the 30S and 50S subunits to form the 70S ribosome, for tRNA binding and peptide bond formation. It has been suggested to have peptidyltransferase activity; this is somewhat controversial. Makes several contacts with the 16S rRNA in the 70S ribosome. This is Large ribosomal subunit protein uL2 from Streptomyces avermitilis (strain ATCC 31267 / DSM 46492 / JCM 5070 / NBRC 14893 / NCIMB 12804 / NRRL 8165 / MA-4680).